The primary structure comprises 209 residues: Large ribosomal subunit protein uL3 (209 aa).

The segment at 132–153 is disordered; the sequence is ATHGNSLSHRVPGSIGQNQTPG. An N5-methylglutamine modification is found at Gln-150.

Belongs to the universal ribosomal protein uL3 family. As to quaternary structure, part of the 50S ribosomal subunit. Forms a cluster with proteins L14 and L19. In terms of processing, methylated by PrmB.

Its function is as follows. One of the primary rRNA binding proteins, it binds directly near the 3'-end of the 23S rRNA, where it nucleates assembly of the 50S subunit. This Erwinia tasmaniensis (strain DSM 17950 / CFBP 7177 / CIP 109463 / NCPPB 4357 / Et1/99) protein is Large ribosomal subunit protein uL3.